The sequence spans 509 residues: Glycerol kinase (509 aa).

Thr12 provides a ligand contact to ADP. ATP is bound by residues Thr12, Thr13, and Ser14. Thr12 lines the sn-glycerol 3-phosphate pocket. Arg16 serves as a coordination point for ADP. Residues Arg82, Glu83, Tyr134, and Asp245 each contribute to the sn-glycerol 3-phosphate site. The glycerol site is built by Arg82, Glu83, Tyr134, Asp245, and Gln246. Residues Thr267 and Gly311 each coordinate ADP. ATP contacts are provided by Thr267, Gly311, Gln315, and Gly412. Residues Gly412 and Asn416 each coordinate ADP.

It belongs to the FGGY kinase family.

The enzyme catalyses glycerol + ATP = sn-glycerol 3-phosphate + ADP + H(+). It functions in the pathway polyol metabolism; glycerol degradation via glycerol kinase pathway; sn-glycerol 3-phosphate from glycerol: step 1/1. Inhibited by fructose 1,6-bisphosphate (FBP). In terms of biological role, key enzyme in the regulation of glycerol uptake and metabolism. Catalyzes the phosphorylation of glycerol to yield sn-glycerol 3-phosphate. This Rhizorhabdus wittichii (strain DSM 6014 / CCUG 31198 / JCM 15750 / NBRC 105917 / EY 4224 / RW1) (Sphingomonas wittichii) protein is Glycerol kinase.